Reading from the N-terminus, the 864-residue chain is Leucine--tRNA ligase (864 aa).

The 'HIGH' region motif lies at 42–52; sequence PYPSGKLHMGH. The 'KMSKS' region motif lies at 622–626; it reads KMSKS. Lys625 is an ATP binding site.

This sequence belongs to the class-I aminoacyl-tRNA synthetase family.

The protein localises to the cytoplasm. It carries out the reaction tRNA(Leu) + L-leucine + ATP = L-leucyl-tRNA(Leu) + AMP + diphosphate. This is Leucine--tRNA ligase from Cellvibrio japonicus (strain Ueda107) (Pseudomonas fluorescens subsp. cellulosa).